The chain runs to 364 residues: tRNA 2-selenouridine synthase (364 aa).

The region spanning 15–138 is the Rhodanese domain; the sequence is FVNDTPLMDM…LRRFLIETID (124 aa). Cys-98 serves as the catalytic S-selanylcysteine intermediate.

This sequence belongs to the SelU family. As to quaternary structure, monomer.

The enzyme catalyses 5-methylaminomethyl-2-thiouridine(34) in tRNA + selenophosphate + (2E)-geranyl diphosphate + H2O + H(+) = 5-methylaminomethyl-2-selenouridine(34) in tRNA + (2E)-thiogeraniol + phosphate + diphosphate. It carries out the reaction 5-methylaminomethyl-2-thiouridine(34) in tRNA + (2E)-geranyl diphosphate = 5-methylaminomethyl-S-(2E)-geranyl-thiouridine(34) in tRNA + diphosphate. The catalysed reaction is 5-methylaminomethyl-S-(2E)-geranyl-thiouridine(34) in tRNA + selenophosphate + H(+) = 5-methylaminomethyl-2-(Se-phospho)selenouridine(34) in tRNA + (2E)-thiogeraniol. It catalyses the reaction 5-methylaminomethyl-2-(Se-phospho)selenouridine(34) in tRNA + H2O = 5-methylaminomethyl-2-selenouridine(34) in tRNA + phosphate. Involved in the post-transcriptional modification of the uridine at the wobble position (U34) of tRNA(Lys), tRNA(Glu) and tRNA(Gln). Catalyzes the conversion of 2-thiouridine (S2U-RNA) to 2-selenouridine (Se2U-RNA). Acts in a two-step process involving geranylation of 2-thiouridine (S2U) to S-geranyl-2-thiouridine (geS2U) and subsequent selenation of the latter derivative to 2-selenouridine (Se2U) in the tRNA chain. In Photobacterium profundum (strain SS9), this protein is tRNA 2-selenouridine synthase.